A 90-amino-acid polypeptide reads, in one-letter code: Probable Fe(2+)-trafficking protein (90 aa).

This sequence belongs to the Fe(2+)-trafficking protein family.

In terms of biological role, could be a mediator in iron transactions between iron acquisition and iron-requiring processes, such as synthesis and/or repair of Fe-S clusters in biosynthetic enzymes. The polypeptide is Probable Fe(2+)-trafficking protein (Chromohalobacter salexigens (strain ATCC BAA-138 / DSM 3043 / CIP 106854 / NCIMB 13768 / 1H11)).